Here is a 251-residue protein sequence, read N- to C-terminus: PF03932 family protein CutC (251 aa).

Belongs to the CutC family.

It is found in the cytoplasm. The sequence is that of PF03932 family protein CutC from Edwardsiella ictaluri (strain 93-146).